Here is a 798-residue protein sequence, read N- to C-terminus: uncharacterized protein (798 aa).

Residues 1–13 are compositionally biased toward low complexity; it reads MSSSQSPSTPSAS. Residues 1 to 58 constitute a chloroplast transit peptide; it reads MSSSQSPSTPSASLVDSSDSKHPDDLPQIYKRRSVWTSSEDAVSSSNSPEQTTPFTVR. 3 disordered regions span residues 1-99, 135-158, and 417-473; these read MSSS…WQDA, AEKK…SMCT, and TGLI…AEPS. Positions 35-55 are enriched in polar residues; sequence VWTSSEDAVSSSNSPEQTTPF. Positions 57-79 are enriched in basic and acidic residues; sequence VREDTNADIARELDLPDDPEPHL. Over residues 137-146 the composition is skewed to basic residues; that stretch reads KKKRKKKKKA. Residues 462-473 are compositionally biased toward low complexity; sequence AAPAEAQGAEPS. Positions 578–658 form a coiled coil; sequence RSNMEVAGKL…MLSEARGLRD (81 aa). Residues 749–798 form a disordered region; sequence DDLKAPAPEPAPLSPGGHRSVESLADEAGITDQAGSLLPAKDNRPSEDLD. At Ser-762 the chain carries Phosphoserine. Basic and acidic residues predominate over residues 789–798; the sequence is KDNRPSEDLD.

It is found in the plastid. It localises to the chloroplast. This is an uncharacterized protein from Arabidopsis thaliana (Mouse-ear cress).